The following is a 195-amino-acid chain: Protein hunchback (195 aa).

3 disordered regions span residues 16 to 57, 64 to 83, and 155 to 195; these read SHHH…SHTN, LKQQQQQQQQHQHQQQQQPM, and LTPP…KYMA. The segment covering 17-29 has biased composition (basic residues); it reads HHHHHHHAHHSHH. Composition is skewed to low complexity over residues 33–44 and 66–81; these read SNSNSNASSPHQ and QQQQQQQQHQHQQQQQ. The segment covering 176–195 has biased composition (basic and acidic residues); that stretch reads EPEKEHDLMSNSSEDMKYMA.

This sequence belongs to the hunchback C2H2-type zinc-finger protein family.

It localises to the nucleus. Functionally, gap class segmentation protein that controls development of head structures. The sequence is that of Protein hunchback (hb) from Drosophila dasycnemia (Fruit fly).